The chain runs to 162 residues: Caveolin-2 (162 aa).

The Cytoplasmic segment spans residues 1 to 86 (MGLETEKADV…FEISKYVIYK (86 aa)). Y19 bears the Phosphotyrosine; by SRC mark. S20 and S23 each carry phosphoserine. Residue Y27 is modified to Phosphotyrosine; by SRC. Position 36 is a phosphoserine (S36). The helical intramembrane region spans 87-107 (FLTFFLAIPMAFAAGILFAIL). Over 108 to 162 (SCLHIWIIMPFVKTCLMVLPSVQTIWKTITDVVIAPLCTSVGRSFSSISLQLSHD) the chain is Cytoplasmic.

Belongs to the caveolin family. In terms of assembly, monomer or homodimer. Interacts with CAV1; the interaction forms a stable heterooligomeric complex that is required for targeting to lipid rafts and for caveolae formation. Tyrosine phosphorylated forms do not form heterooligomers with the Tyr-19-phosphorylated form existing as a monomer or dimer, and the Tyr-27-form as a monomer only. Interacts (tyrosine phosphorylated form) with the SH2 domain-containing proteins, RASA1, NCK1 and SRC. Interacts (tyrosine phosphorylated form) with INSR, the interaction (Tyr-27-phosphorylated form) is increased on insulin stimulation. Interacts (Tyr-19 phosphorylated form) with MAPK1 (phosphorylated form); the interaction, promoted by insulin, leads to nuclear location and MAPK1 activation. Interacts with STAT3; the interaction is increased on insulin-induced tyrosine phosphorylation leading to STAT activation. Phosphorylated on serine and tyrosine residues. CAV1 promotes phosphorylation on Ser-23 which then targets the complex to the plasma membrane, lipid rafts and caveolae. Phosphorylation on Ser-36 appears to modulate mitosis in endothelial cells. Phosphorylation on both Tyr-19 and Tyr-27 is required for insulin-induced 'Ser-727' phosphorylation of STAT3 and its activation. Phosphorylation on Tyr-19 is required for insulin-induced phosphorylation of MAPK1 and DNA binding of STAT3. Tyrosine phosphorylation is induced by both EGF and insulin (By. similarity).

The protein localises to the nucleus. The protein resides in the cytoplasm. It localises to the golgi apparatus membrane. Its subcellular location is the cell membrane. It is found in the membrane. The protein localises to the caveola. May act as a scaffolding protein within caveolar membranes. Interacts directly with G-protein alpha subunits and can functionally regulate their activity. Acts as an accessory protein in conjunction with CAV1 in targeting to lipid rafts and driving caveolae formation. The Ser-36 phosphorylated form has a role in modulating mitosis in endothelial cells. Positive regulator of cellular mitogenesis of the MAPK signaling pathway. Required for the insulin-stimulated nuclear translocation and activation of MAPK1 and STAT3, and the subsequent regulation of cell cycle progression. This chain is Caveolin-2 (CAV2), found in Mustela putorius furo (European domestic ferret).